The chain runs to 258 residues: Gene 3 protein (258 aa).

Positions 163–176 (STENLLGQTQSSTH) are enriched in polar residues. The disordered stretch occupies residues 163–258 (STENLLGQTQ…TRRYPPSFFK (96 aa)). Positions 214 to 240 (SIREETVSGMARAREECNSPSEHDRLT) are enriched in basic and acidic residues.

This chain is Gene 3 protein, found in Equine herpesvirus 1 (strain Kentucky A) (EHV-1).